The primary structure comprises 277 residues: Acetyl-coenzyme A carboxylase carboxyl transferase subunit beta (277 aa).

In terms of domain architecture, CoA carboxyltransferase N-terminal spans 22–277 (LWTKCPGCNR…TLKQLLYFLT (256 aa)). Residues Cys-26, Cys-29, Cys-45, and Cys-48 each coordinate Zn(2+). The C4-type zinc-finger motif lies at 26–48 (CPGCNRFLYTKELELNQSVCHYC).

The protein belongs to the AccD/PCCB family. Acetyl-CoA carboxylase is a heterohexamer composed of biotin carboxyl carrier protein (AccB), biotin carboxylase (AccC) and two subunits each of ACCase subunit alpha (AccA) and ACCase subunit beta (AccD). Zn(2+) serves as cofactor.

It is found in the cytoplasm. The enzyme catalyses N(6)-carboxybiotinyl-L-lysyl-[protein] + acetyl-CoA = N(6)-biotinyl-L-lysyl-[protein] + malonyl-CoA. The protein operates within lipid metabolism; malonyl-CoA biosynthesis; malonyl-CoA from acetyl-CoA: step 1/1. Its function is as follows. Component of the acetyl coenzyme A carboxylase (ACC) complex. Biotin carboxylase (BC) catalyzes the carboxylation of biotin on its carrier protein (BCCP) and then the CO(2) group is transferred by the transcarboxylase to acetyl-CoA to form malonyl-CoA. The sequence is that of Acetyl-coenzyme A carboxylase carboxyl transferase subunit beta from Methylacidiphilum infernorum (isolate V4) (Methylokorus infernorum (strain V4)).